A 168-amino-acid chain; its full sequence is 2-C-methyl-D-erythritol 2,4-cyclodiphosphate synthase (168 aa).

A divalent metal cation-binding residues include D13 and H15. Residues 13–15 and 39–40 contribute to the 4-CDP-2-C-methyl-D-erythritol 2-phosphate site; these read DVH and HS. Position 47 (H47) interacts with a divalent metal cation. 4-CDP-2-C-methyl-D-erythritol 2-phosphate contacts are provided by residues 61-63, 66-70, F144, and K147; these read DIG and FPDTD.

This sequence belongs to the IspF family. In terms of assembly, homotrimer. It depends on a divalent metal cation as a cofactor.

The enzyme catalyses 4-CDP-2-C-methyl-D-erythritol 2-phosphate = 2-C-methyl-D-erythritol 2,4-cyclic diphosphate + CMP. It functions in the pathway isoprenoid biosynthesis; isopentenyl diphosphate biosynthesis via DXP pathway; isopentenyl diphosphate from 1-deoxy-D-xylulose 5-phosphate: step 4/6. Functionally, involved in the biosynthesis of isopentenyl diphosphate (IPP) and dimethylallyl diphosphate (DMAPP), two major building blocks of isoprenoid compounds. Catalyzes the conversion of 4-diphosphocytidyl-2-C-methyl-D-erythritol 2-phosphate (CDP-ME2P) to 2-C-methyl-D-erythritol 2,4-cyclodiphosphate (ME-CPP) with a corresponding release of cytidine 5-monophosphate (CMP). This Ralstonia pickettii (strain 12J) protein is 2-C-methyl-D-erythritol 2,4-cyclodiphosphate synthase.